The following is a 193-amino-acid chain: MNFLAHLHLAALADSSLLGNLLADFVRGNPQGEYPPEIVAGIMMHRRVDVMTDTLPLVKEARTYFSADYRRVSPITLDVLWDHFLARHWDQLVPNCTLPDFLQHAQSQILPHLPHTPARFQSLNAYLWSERWLERYAELPFIADVLQGMANRRPKLAALAGSFYAIEQHYQPLEDLFLTFYPTMMRQAQHKQI.

Belongs to the AcpH family.

The enzyme catalyses holo-[ACP] + H2O = apo-[ACP] + (R)-4'-phosphopantetheine + H(+). Functionally, converts holo-ACP to apo-ACP by hydrolytic cleavage of the phosphopantetheine prosthetic group from ACP. The polypeptide is Acyl carrier protein phosphodiesterase (Yersinia pestis).